A 1222-amino-acid chain; its full sequence is PAN2-PAN3 deadenylation complex catalytic subunit PAN2 (1222 aa).

2 WD repeats span residues 104 to 143 and 276 to 315; these read PEMTELRCMSFTAQPHKIIVAGLQSAMFIIDVEKGAIVDQ and ANVAFMLGLEVSPSGEALAINDAECSIHLWGSPSKIHFNE. Positions 316–451 are linker; the sequence is IGKETEFSDI…GLKINGETKE (136 aa). The region spanning 452–821 is the USP domain; it reads DPLLKYSNVE…SPCTLAYQIS (370 aa). The region spanning 871 to 1027 is the Exonuclease domain; that stretch reads ALDTEFVDLE…WAVFKEYIQE (157 aa). 3 residues coordinate a divalent metal cation: Asp873, Glu875, and Asp982. A disordered region spans residues 1035 to 1067; sequence TSITTTTNPNIHDANTSTTTTTAITTTPPEGHD. Low complexity predominate over residues 1050–1061; the sequence is TSTTTTTAITTT. Residue Asp1071 participates in a divalent metal cation binding. Disordered regions lie at residues 1110 to 1152 and 1167 to 1222; these read PARY…LSGR and ASVT…SPMR. The span at 1119 to 1133 shows a compositional bias: low complexity; sequence PNPNNNNINNGVNPN. Residues 1134–1144 show a composition bias toward polar residues; that stretch reads GLSTPGSTNPI. The segment covering 1180 to 1191 has biased composition (low complexity); the sequence is NGSMSGSTPSTP. Positions 1207-1216 are enriched in gly residues; that stretch reads SFGGAKGLTF.

The protein belongs to the peptidase C19 family. PAN2 subfamily. As to quaternary structure, forms a heterotrimer with an asymmetric homodimer of the regulatory subunit PAN3 to form the poly(A)-nuclease (PAN) deadenylation complex. A divalent metal cation is required as a cofactor.

The protein resides in the cytoplasm. The enzyme catalyses Exonucleolytic cleavage of poly(A) to 5'-AMP.. With respect to regulation, positively regulated by the regulatory subunit PAN3. Catalytic subunit of the poly(A)-nuclease (PAN) deadenylation complex, one of two cytoplasmic mRNA deadenylases involved in mRNA turnover. PAN specifically shortens poly(A) tails of RNA and the activity is stimulated by poly(A)-binding protein PAB1. PAN deadenylation is followed by rapid degradation of the shortened mRNA tails by the CCR4-NOT complex. Deadenylated mRNAs are then degraded by two alternative mechanisms, namely exosome-mediated 3'-5' exonucleolytic degradation, or deadenylation-dependent mRNA decaping and subsequent 5'-3' exonucleolytic degradation by XRN1. May also be involved in post-transcriptional maturation of mRNA poly(A) tails. This is PAN2-PAN3 deadenylation complex catalytic subunit PAN2 from Coccidioides immitis (strain RS) (Valley fever fungus).